We begin with the raw amino-acid sequence, 589 residues long: ATP-dependent lipid A-core flippase (589 aa).

6 helical membrane passes run 37–57 (ALAI…PALL), 72–92 (LWLV…SGFL), 151–171 (IMKL…LVYL), 173–193 (WKLM…IQVL), 260–280 (SAIT…IALL), and 286–306 (TTTV…IAPV). Residues 37 to 318 (ALAIGATIVA…LSDAATPVTR (282 aa)) enclose the ABC transmembrane type-1 domain. The ABC transporter domain occupies 350-584 (IEFADVSVIY…NGAYAHLYRL (235 aa)). 384 to 391 (GASGSGKT) contacts ATP.

It belongs to the ABC transporter superfamily. Lipid exporter (TC 3.A.1.106) family. In terms of assembly, homodimer.

The protein localises to the cell inner membrane. It catalyses the reaction ATP + H2O + lipid A-core oligosaccharideSide 1 = ADP + phosphate + lipid A-core oligosaccharideSide 2.. Functionally, involved in lipopolysaccharide (LPS) biosynthesis. Translocates lipid A-core from the inner to the outer leaflet of the inner membrane. Transmembrane domains (TMD) form a pore in the inner membrane and the ATP-binding domain (NBD) is responsible for energy generation. In Polaromonas sp. (strain JS666 / ATCC BAA-500), this protein is ATP-dependent lipid A-core flippase.